The sequence spans 218 residues: Transcription initiation factor TFIID subunit 10 (218 aa).

Low complexity-rich tracts occupy residues Met-1 to Pro-21 and Ala-29 to Ala-39. Residues Met-1–Ala-85 form a disordered region. Ser-2 is modified (N-acetylserine). Ser-44 is modified (phosphoserine). Thr-48 is modified (phosphothreonine). Positions Thr-48–Gly-62 are enriched in gly residues. Residues Lys-187–Lys-189 carry the [KR]-[STA]-K motif motif. The residue at position 189 (Lys-189) is an Allysine; alternate. Position 189 is an N6,N6,N6-trimethyllysine; alternate (Lys-189).

The protein belongs to the TAF10 family. As to quaternary structure, component of the TFIID basal transcription factor complex, composed of TATA-box-binding protein TBP, and a number of TBP-associated factors (TAFs), including TAF1, TAF2, TAF3, TAF4, TAF5, TAF6, TAF7, TAF8, TAF9, TAF10, TAF11, TAF12 and TAF13. Component of the TATA-binding protein-free TAF complex (TFTC), the PCAF histone acetylase complex and the STAGA transcription coactivator-HAT complex. The PCAF complex consists at least of TADA2L/ADA2, TADA3L/ADA3, SUPT3H, TAF5L TAF6L, TAF9, TAF10, TAF12 and TRRAP. The TFTC-HAT complex consists at least of TAF5L, TAF6L, TADA3L, SUPT3H, TAF2, TAF4, TAF5, GCN5L2/GCN5, TAF10 and TRRAP. The STAGA transcription coactivator-HAT complex consists at least of SUPT3H, GCN5L2, TAF5L, TAF6L, SUPT7L, TADA3L, TAD1L, TAF10, TAF12, TRRAP and TAF9. The STAGA core complex is associated with a subcomplex required for histone deubiquitination composed of ATXN7L3, ENY2 and USP22. Interacts with TAF3. Interacts with LOXL2. Interacts with TAF12 isoform TAFII20; the interaction is direct. In terms of processing, monomethylated at Lys-189 by SETD7, leading to increased affinity for RNA polymerase II. Lysine deamination at Lys-189 to form allysine is mediated by LOXL2. Allysine formation by LOXL2 results in release of TAF10 from promoters, leading to inhibition of TFIID-dependent transcription.

It is found in the nucleus. In terms of biological role, the TFIID basal transcription factor complex plays a major role in the initiation of RNA polymerase II (Pol II)-dependent transcription. TFIID recognizes and binds promoters with or without a TATA box via its subunit TBP, a TATA-box-binding protein, and promotes assembly of the pre-initiation complex (PIC). The TFIID complex consists of TBP and TBP-associated factors (TAFs), including TAF1, TAF2, TAF3, TAF4, TAF5, TAF6, TAF7, TAF8, TAF9, TAF10, TAF11, TAF12 and TAF13. TAF10 is also component of the PCAF histone acetylase complex, the TATA-binding protein-free TAF complex (TFTC) and the STAGA transcription coactivator-HAT complex. May regulate cyclin E expression. The chain is Transcription initiation factor TFIID subunit 10 (TAF10) from Homo sapiens (Human).